The sequence spans 266 residues: GTP cyclohydrolase FolE2 (266 aa).

It belongs to the GTP cyclohydrolase IV family.

It carries out the reaction GTP + H2O = 7,8-dihydroneopterin 3'-triphosphate + formate + H(+). The protein operates within cofactor biosynthesis; 7,8-dihydroneopterin triphosphate biosynthesis; 7,8-dihydroneopterin triphosphate from GTP: step 1/1. Its function is as follows. Converts GTP to 7,8-dihydroneopterin triphosphate. This Methylobacillus flagellatus (strain ATCC 51484 / DSM 6875 / VKM B-1610 / KT) protein is GTP cyclohydrolase FolE2.